A 248-amino-acid chain; its full sequence is 1-(5-phosphoribosyl)-5-[(5-phosphoribosylamino)methylideneamino] imidazole-4-carboxamide isomerase (248 aa).

Aspartate 8 functions as the Proton acceptor in the catalytic mechanism. Catalysis depends on aspartate 129, which acts as the Proton donor.

It belongs to the HisA/HisF family.

It localises to the cytoplasm. The enzyme catalyses 1-(5-phospho-beta-D-ribosyl)-5-[(5-phospho-beta-D-ribosylamino)methylideneamino]imidazole-4-carboxamide = 5-[(5-phospho-1-deoxy-D-ribulos-1-ylimino)methylamino]-1-(5-phospho-beta-D-ribosyl)imidazole-4-carboxamide. Its pathway is amino-acid biosynthesis; L-histidine biosynthesis; L-histidine from 5-phospho-alpha-D-ribose 1-diphosphate: step 4/9. The sequence is that of 1-(5-phosphoribosyl)-5-[(5-phosphoribosylamino)methylideneamino] imidazole-4-carboxamide isomerase from Desulfitobacterium hafniense (strain Y51).